Here is a 399-residue protein sequence, read N- to C-terminus: Flavohemoprotein (399 aa).

Positions 1–138 (MLDNKTIEII…IADAFIGIEK (138 aa)) constitute a Globin domain. Heme b is bound at residue His-85. Residues Tyr-95 and Glu-137 each act as charge relay system in the active site. A reductase region spans residues 149–399 (GGWKEYKPFV…GPQLSLAQSV (251 aa)). The FAD-binding FR-type domain occupies 152–255 (KEYKPFVIAK…SAPAGDFVLD (104 aa)). FAD-binding positions include Tyr-190 and 206–209 (RQYS). 268–273 (GVGITP) contributes to the NADP(+) binding site. 388-391 (LFGP) provides a ligand contact to FAD.

The protein belongs to the globin family. Two-domain flavohemoproteins subfamily. It in the C-terminal section; belongs to the flavoprotein pyridine nucleotide cytochrome reductase family. Heme b is required as a cofactor. The cofactor is FAD.

The catalysed reaction is 2 nitric oxide + NADPH + 2 O2 = 2 nitrate + NADP(+) + H(+). It carries out the reaction 2 nitric oxide + NADH + 2 O2 = 2 nitrate + NAD(+) + H(+). Its function is as follows. Is involved in NO detoxification in an aerobic process, termed nitric oxide dioxygenase (NOD) reaction that utilizes O(2) and NAD(P)H to convert NO to nitrate, which protects the bacterium from various noxious nitrogen compounds. Therefore, plays a central role in the inducible response to nitrosative stress. The polypeptide is Flavohemoprotein (hmp) (Bacillus subtilis (strain 168)).